Consider the following 479-residue polypeptide: Ribulose bisphosphate carboxylase large chain (479 aa).

A propeptide spanning residues 1–2 (MS) is cleaved from the precursor. An N-acetylproline modification is found at P3. At K14 the chain carries N6,N6,N6-trimethyllysine. Residues N123 and T173 each coordinate substrate. K175 serves as the catalytic Proton acceptor. Residue K177 participates in substrate binding. Residues K201, D203, and E204 each coordinate Mg(2+). Position 201 is an N6-carboxylysine (K201). H294 serves as the catalytic Proton acceptor. The substrate site is built by R295, H327, and S379.

The protein belongs to the RuBisCO large chain family. Type I subfamily. In terms of assembly, heterohexadecamer of 8 large chains and 8 small chains. Mg(2+) is required as a cofactor.

It is found in the plastid. The protein resides in the chloroplast. It catalyses the reaction 2 (2R)-3-phosphoglycerate + 2 H(+) = D-ribulose 1,5-bisphosphate + CO2 + H2O. It carries out the reaction D-ribulose 1,5-bisphosphate + O2 = 2-phosphoglycolate + (2R)-3-phosphoglycerate + 2 H(+). Its function is as follows. RuBisCO catalyzes two reactions: the carboxylation of D-ribulose 1,5-bisphosphate, the primary event in carbon dioxide fixation, as well as the oxidative fragmentation of the pentose substrate in the photorespiration process. Both reactions occur simultaneously and in competition at the same active site. In Jasminum nudiflorum (Winter jasmine), this protein is Ribulose bisphosphate carboxylase large chain.